The sequence spans 386 residues: Succinate--CoA ligase [ADP-forming] subunit beta (386 aa).

Residues 9-244 (KDILRQFGVP…LDEEDPAEVE (236 aa)) enclose the ATP-grasp domain. ATP-binding positions include lysine 46, 53–55 (GRG), glutamate 99, alanine 102, and glutamate 107. Mg(2+) contacts are provided by asparagine 199 and aspartate 213. Residues asparagine 264 and 321 to 323 (GIM) each bind substrate.

Belongs to the succinate/malate CoA ligase beta subunit family. As to quaternary structure, heterotetramer of two alpha and two beta subunits. The cofactor is Mg(2+).

It catalyses the reaction succinate + ATP + CoA = succinyl-CoA + ADP + phosphate. It carries out the reaction GTP + succinate + CoA = succinyl-CoA + GDP + phosphate. Its pathway is carbohydrate metabolism; tricarboxylic acid cycle; succinate from succinyl-CoA (ligase route): step 1/1. Succinyl-CoA synthetase functions in the citric acid cycle (TCA), coupling the hydrolysis of succinyl-CoA to the synthesis of either ATP or GTP and thus represents the only step of substrate-level phosphorylation in the TCA. The beta subunit provides nucleotide specificity of the enzyme and binds the substrate succinate, while the binding sites for coenzyme A and phosphate are found in the alpha subunit. The protein is Succinate--CoA ligase [ADP-forming] subunit beta of Delftia acidovorans (strain DSM 14801 / SPH-1).